A 119-amino-acid polypeptide reads, in one-letter code: Holo-[acyl-carrier-protein] synthase (119 aa).

Mg(2+) is bound by residues Asp-8 and Glu-50.

The protein belongs to the P-Pant transferase superfamily. AcpS family. Mg(2+) is required as a cofactor.

The protein resides in the cytoplasm. It catalyses the reaction apo-[ACP] + CoA = holo-[ACP] + adenosine 3',5'-bisphosphate + H(+). Its function is as follows. Transfers the 4'-phosphopantetheine moiety from coenzyme A to a Ser of acyl-carrier-protein. This is Holo-[acyl-carrier-protein] synthase from Clavibacter sepedonicus (Clavibacter michiganensis subsp. sepedonicus).